Reading from the N-terminus, the 226-residue chain is Ribonuclease 3 (226 aa).

In terms of domain architecture, RNase III spans 7-129; that stretch reads LPRLCRTLGY…IIGAVYLDAD (123 aa). E42 serves as a coordination point for Mg(2+). D46 is a catalytic residue. Residues D115 and E118 each contribute to the Mg(2+) site. Residue E118 is part of the active site. The 71-residue stretch at 156 to 226 folds into the DRBM domain; the sequence is DPKTILQEYL…AAQVLELLNK (71 aa).

It belongs to the ribonuclease III family. Homodimer. Mg(2+) is required as a cofactor.

It localises to the cytoplasm. The catalysed reaction is Endonucleolytic cleavage to 5'-phosphomonoester.. In terms of biological role, digests double-stranded RNA. Involved in the processing of primary rRNA transcript to yield the immediate precursors to the large and small rRNAs (23S and 16S). Processes some mRNAs, and tRNAs when they are encoded in the rRNA operon. Processes pre-crRNA and tracrRNA of type II CRISPR loci if present in the organism. The protein is Ribonuclease 3 of Shewanella frigidimarina (strain NCIMB 400).